The primary structure comprises 172 residues: Putative phosphoesterase BcerKBAB4_1135 (172 aa).

Catalysis depends on His34, which acts as the Proton donor. Short sequence motifs (HXTX) lie at residues 34-37 (HITL) and 115-118 (HLTI). Residue His115 is the Proton acceptor of the active site.

Belongs to the 2H phosphoesterase superfamily. YjcG family.

The protein is Putative phosphoesterase BcerKBAB4_1135 of Bacillus mycoides (strain KBAB4) (Bacillus weihenstephanensis).